We begin with the raw amino-acid sequence, 337 residues long: UPF0252 protein PH1321 (337 aa).

A helical transmembrane segment spans residues 100 to 120 (IIGMLFLVFIILPAITSNLWS).

The protein belongs to the UPF0252 family.

It localises to the membrane. This Pyrococcus horikoshii (strain ATCC 700860 / DSM 12428 / JCM 9974 / NBRC 100139 / OT-3) protein is UPF0252 protein PH1321.